Consider the following 191-residue polypeptide: Peptidyl-tRNA hydrolase (191 aa).

Y16 contributes to the tRNA binding site. The Proton acceptor role is filled by H21. TRNA-binding residues include Y67, N69, and N115.

Belongs to the PTH family. In terms of assembly, monomer.

The protein resides in the cytoplasm. The enzyme catalyses an N-acyl-L-alpha-aminoacyl-tRNA + H2O = an N-acyl-L-amino acid + a tRNA + H(+). Its function is as follows. Hydrolyzes ribosome-free peptidyl-tRNAs (with 1 or more amino acids incorporated), which drop off the ribosome during protein synthesis, or as a result of ribosome stalling. In terms of biological role, catalyzes the release of premature peptidyl moieties from peptidyl-tRNA molecules trapped in stalled 50S ribosomal subunits, and thus maintains levels of free tRNAs and 50S ribosomes. In Wigglesworthia glossinidia brevipalpis, this protein is Peptidyl-tRNA hydrolase.